The sequence spans 80 residues: Beta-toxin KAaH1 (80 aa).

A signal peptide spans 1–22; sequence MMKLMLFSIIVILFSLIGSIHG. An LCN-type CS-alpha/beta domain is found at 25–80; the sequence is VPGNYPLDSSDDTYLCAPLGENPFCIKICRKHGVKYGYCYAFQCWCEYLEDKNVKI. 3 cysteine pairs are disulfide-bonded: Cys-40–Cys-63, Cys-49–Cys-68, and Cys-53–Cys-70.

The protein belongs to the long (3 C-C) scorpion toxin superfamily. Sodium/Potassium channel inhibitor family. As to expression, expressed by the venom gland.

It is found in the secreted. Its function is as follows. Inhibits the vertebrate potassium channels Kv1.1/KCNA1 and Kv1.3/KCNA3 in vitro with an IC(50) of 5.3 nM and 50.0 nM respectively. The chain is Beta-toxin KAaH1 from Androctonus australis (Sahara scorpion).